The sequence spans 482 residues: Phenylalanine--tRNA ligase alpha subunit (482 aa).

Residues Thr327, 366–368 (QIE), and Tyr406 contribute to the L-phenylalanine site. Glu408 is a binding site for Mg(2+). L-phenylalanine is bound at residue Phe430.

Belongs to the class-II aminoacyl-tRNA synthetase family. Phe-tRNA synthetase alpha subunit type 2 subfamily. In terms of assembly, tetramer of two alpha and two beta subunits. Mg(2+) serves as cofactor.

Its subcellular location is the cytoplasm. The enzyme catalyses tRNA(Phe) + L-phenylalanine + ATP = L-phenylalanyl-tRNA(Phe) + AMP + diphosphate + H(+). The protein is Phenylalanine--tRNA ligase alpha subunit of Thermoplasma volcanium (strain ATCC 51530 / DSM 4299 / JCM 9571 / NBRC 15438 / GSS1).